The sequence spans 507 residues: ATP synthase subunit alpha, chloroplastic (507 aa).

170–177 (GDRQTGKT) is an ATP binding site.

This sequence belongs to the ATPase alpha/beta chains family. F-type ATPases have 2 components, CF(1) - the catalytic core - and CF(0) - the membrane proton channel. CF(1) has five subunits: alpha(3), beta(3), gamma(1), delta(1), epsilon(1). CF(0) has four main subunits: a, b, b' and c.

It localises to the plastid. The protein localises to the chloroplast thylakoid membrane. The catalysed reaction is ATP + H2O + 4 H(+)(in) = ADP + phosphate + 5 H(+)(out). In terms of biological role, produces ATP from ADP in the presence of a proton gradient across the membrane. The alpha chain is a regulatory subunit. The polypeptide is ATP synthase subunit alpha, chloroplastic (Daucus carota (Wild carrot)).